A 252-amino-acid chain; its full sequence is Geranylgeranylglyceryl phosphate synthase (252 aa).

Residues aspartate 26 and serine 55 each coordinate Mg(2+). Residues 174 to 180 (YLEAGSG), 205 to 206 (GG), and 227 to 228 (GT) each bind sn-glycerol 1-phosphate.

The protein belongs to the GGGP/HepGP synthase family. Group II subfamily. Mg(2+) serves as cofactor.

Its subcellular location is the cytoplasm. The enzyme catalyses sn-glycerol 1-phosphate + (2E,6E,10E)-geranylgeranyl diphosphate = sn-3-O-(geranylgeranyl)glycerol 1-phosphate + diphosphate. It participates in membrane lipid metabolism; glycerophospholipid metabolism. Its function is as follows. Prenyltransferase that catalyzes the transfer of the geranylgeranyl moiety of geranylgeranyl diphosphate (GGPP) to the C3 hydroxyl of sn-glycerol-1-phosphate (G1P). This reaction is the first ether-bond-formation step in the biosynthesis of archaeal membrane lipids. This Thermococcus gammatolerans (strain DSM 15229 / JCM 11827 / EJ3) protein is Geranylgeranylglyceryl phosphate synthase.